We begin with the raw amino-acid sequence, 94 residues long: Acylphosphatase (94 aa).

The 87-residue stretch at 8-94 (TLFIIVHGKV…GRRFKHFAQH (87 aa)) folds into the Acylphosphatase-like domain. Active-site residues include arginine 23 and asparagine 41. The disordered stretch occupies residues 69–94 (PPAASVTELESRREDGGRRFKHFAQH). Residues 77-86 (LESRREDGGR) are compositionally biased toward basic and acidic residues.

Belongs to the acylphosphatase family.

It catalyses the reaction an acyl phosphate + H2O = a carboxylate + phosphate + H(+). The protein is Acylphosphatase (acyP) of Bordetella avium (strain 197N).